A 318-amino-acid polypeptide reads, in one-letter code: 2,4-dinitroanisole O-demethylase subunit beta (318 aa).

Belongs to the metallo-beta-lactamase superfamily. In terms of assembly, part of the complex DnhAB composed of the 2,4-dinitroanisole O-demethylase alpha (DnhA) and beta (DnhB) subunits.

It carries out the reaction 2,4-dinitroanisole + H2O = 2,4-dinitrophenol + methanol + H(+). Functionally, involved in the degradation of 2,4-dinitroanisole (DNAN), an insensitive munition ingredient used in explosive formulations as a replacement for 2,4,6-trinitrotoluene (TNT). Catalyzes the removal of the methyl group from 2,4-dinitroanisole (DNAN) to yield 2,4-dinitrophenol (2,4-DNP) and methanol. This Nocardioides sp. (strain JS1661) protein is 2,4-dinitroanisole O-demethylase subunit beta.